The chain runs to 35 residues: Tamulustoxin-2 (35 aa).

Intrachain disulfides connect Cys-2-Cys-22, Cys-7-Cys-31, and Cys-11-Cys-33.

It belongs to the short scorpion toxin superfamily. Potassium channel inhibitor family. Expressed by the venom gland.

It localises to the secreted. Blocks Kv1.6/KCNA6 potassium channels. This Hottentotta tamulus (Eastern Indian scorpion) protein is Tamulustoxin-2.